The following is a 215-amino-acid chain: MKFFLDTANVDKIKEFNALGLVDGVTTNPSLIKKEGRDFYEVIKEICSIVEGPVSAEVIALDAEGMVNEAKELVKIAKNVVIKIPMTKEGMKAVNILSKEGIKTNVTLIFSANQALLAAKAGATYVSPFVGRLDDIGQDGLLLISEIMQIFGAYGIETEVIVASVRHPIHVTESAKMGADIATIPFDVLDKLFNHSLTDIGIEKFLADWDAHMKR.

The active-site Schiff-base intermediate with substrate is lysine 83.

The protein belongs to the transaldolase family. Type 3B subfamily.

The protein resides in the cytoplasm. The catalysed reaction is D-sedoheptulose 7-phosphate + D-glyceraldehyde 3-phosphate = D-erythrose 4-phosphate + beta-D-fructose 6-phosphate. It participates in carbohydrate degradation; pentose phosphate pathway; D-glyceraldehyde 3-phosphate and beta-D-fructose 6-phosphate from D-ribose 5-phosphate and D-xylulose 5-phosphate (non-oxidative stage): step 2/3. Functionally, transaldolase is important for the balance of metabolites in the pentose-phosphate pathway. The chain is Probable transaldolase from Methanococcus maripaludis (strain C6 / ATCC BAA-1332).